The primary structure comprises 55 residues: Large ribosomal subunit protein bL33 (55 aa).

The segment covering 1–11 (MAKSGRDKIKL) has biased composition (basic and acidic residues). The interval 1-28 (MAKSGRDKIKLESTAGTGHFYTTTKNKR) is disordered. Positions 14–24 (TAGTGHFYTTT) are enriched in polar residues.

The protein belongs to the bacterial ribosomal protein bL33 family.

This Janthinobacterium sp. (strain Marseille) (Minibacterium massiliensis) protein is Large ribosomal subunit protein bL33.